The primary structure comprises 358 residues: UDP-N-acetylglucosamine--N-acetylmuramyl-(pentapeptide) pyrophosphoryl-undecaprenol N-acetylglucosamine transferase (358 aa).

UDP-N-acetyl-alpha-D-glucosamine contacts are provided by residues Thr13–Gly15, Asn125, Arg161, Ser189, Ile244, and Gln288.

Belongs to the glycosyltransferase 28 family. MurG subfamily.

It is found in the cell membrane. The catalysed reaction is di-trans,octa-cis-undecaprenyl diphospho-N-acetyl-alpha-D-muramoyl-L-alanyl-D-glutamyl-meso-2,6-diaminopimeloyl-D-alanyl-D-alanine + UDP-N-acetyl-alpha-D-glucosamine = di-trans,octa-cis-undecaprenyl diphospho-[N-acetyl-alpha-D-glucosaminyl-(1-&gt;4)]-N-acetyl-alpha-D-muramoyl-L-alanyl-D-glutamyl-meso-2,6-diaminopimeloyl-D-alanyl-D-alanine + UDP + H(+). Its pathway is cell wall biogenesis; peptidoglycan biosynthesis. In terms of biological role, cell wall formation. Catalyzes the transfer of a GlcNAc subunit on undecaprenyl-pyrophosphoryl-MurNAc-pentapeptide (lipid intermediate I) to form undecaprenyl-pyrophosphoryl-MurNAc-(pentapeptide)GlcNAc (lipid intermediate II). The protein is UDP-N-acetylglucosamine--N-acetylmuramyl-(pentapeptide) pyrophosphoryl-undecaprenol N-acetylglucosamine transferase of Baumannia cicadellinicola subsp. Homalodisca coagulata.